A 207-amino-acid polypeptide reads, in one-letter code: uncharacterized protein (207 aa).

Catalysis depends on charge relay system residues S119 and H160.

The protein belongs to the peptidase S51 family.

This is an uncharacterized protein from Pasteurella multocida (strain Pm70).